The sequence spans 271 residues: Proteasome inhibitor PI31 subunit (271 aa).

Ala2 carries the post-translational modification N-acetylalanine. Residues 2 to 150 (AGLEVLFASA…PIHEQWEKAN (149 aa)) are important for homodimerization and interaction with FBXO7. Residue Ser153 is modified to Phosphoserine. Arg205 is modified (omega-N-methylarginine). Arg219 is subject to Asymmetric dimethylarginine. Residues 222–271 (IDPSSGLPNRLPPGAVPPGARFDPFGPIGTSPPGPNPDHLPPPGYDDMYL) form a disordered region. Arg231 is subject to Omega-N-methylarginine. The span at 251 to 265 (TSPPGPNPDHLPPPG) shows a compositional bias: pro residues. Ser252 carries the phosphoserine modification.

The protein belongs to the proteasome inhibitor PI31 family. In terms of assembly, monomer and homodimer. Interacts with FBXO7. Interacts with the 20S proteasome.

The protein localises to the cytoplasm. The protein resides in the endoplasmic reticulum. Its function is as follows. Plays an important role in control of proteasome function. Inhibits the hydrolysis of protein and peptide substrates by the 20S proteasome. Also inhibits the activation of the proteasome by the proteasome regulatory proteins PA700 and PA28. The sequence is that of Proteasome inhibitor PI31 subunit (PSMF1) from Homo sapiens (Human).